A 361-amino-acid chain; its full sequence is Epoxyqueuosine reductase (361 aa).

Residue aspartate 147 is the Proton donor of the active site. The region spanning 193–222 is the 4Fe-4S ferredoxin-type domain; that stretch reads VDPAMDSEHCGRCSACLDICPTAAFVGPYR. [4Fe-4S] cluster is bound by residues cysteine 202, cysteine 205, cysteine 208, cysteine 212, cysteine 228, cysteine 255, cysteine 258, and cysteine 262.

It belongs to the QueG family. Monomer. It depends on cob(II)alamin as a cofactor. Requires [4Fe-4S] cluster as cofactor.

It is found in the cytoplasm. The catalysed reaction is epoxyqueuosine(34) in tRNA + AH2 = queuosine(34) in tRNA + A + H2O. It participates in tRNA modification; tRNA-queuosine biosynthesis. Its function is as follows. Catalyzes the conversion of epoxyqueuosine (oQ) to queuosine (Q), which is a hypermodified base found in the wobble positions of tRNA(Asp), tRNA(Asn), tRNA(His) and tRNA(Tyr). The sequence is that of Epoxyqueuosine reductase from Pseudomonas aeruginosa (strain ATCC 15692 / DSM 22644 / CIP 104116 / JCM 14847 / LMG 12228 / 1C / PRS 101 / PAO1).